We begin with the raw amino-acid sequence, 63 residues long: Potassium channel toxin Sp4 (63 aa).

The signal sequence occupies residues 1 to 20 (MNKVHFALFLLVLTVLAVSG). 3 cysteine pairs are disulfide-bonded: cysteine 31–cysteine 53, cysteine 38–cysteine 58, and cysteine 42–cysteine 60.

This sequence belongs to the long chain scorpion toxin family. Class 2 subfamily. In terms of tissue distribution, expressed by the venom gland.

It localises to the secreted. In terms of biological role, this recombinant toxin selectively inhibits mouse voltage-gated potassium channel Kv1.3/KCNA3 (IC(50)=24.73 nM). The sequence is that of Potassium channel toxin Sp4 from Scorpiops pococki (Scorpion).